Reading from the N-terminus, the 423-residue chain is Glutamate--cysteine ligase EgtA (423 aa).

The protein belongs to the glutamate--cysteine ligase type 2 family. EgtA subfamily.

The catalysed reaction is L-cysteine + L-glutamate + ATP = gamma-L-glutamyl-L-cysteine + ADP + phosphate + H(+). The protein operates within amino-acid biosynthesis; ergothioneine biosynthesis. Functionally, catalyzes the synthesis of gamma-glutamylcysteine (gamma-GC). This compound is used as substrate for the biosynthesis of the low-molecular thiol compound ergothioneine. This is Glutamate--cysteine ligase EgtA from Mycolicibacterium smegmatis (strain ATCC 700084 / mc(2)155) (Mycobacterium smegmatis).